Here is a 278-residue protein sequence, read N- to C-terminus: Manganese import system permease protein ScaB (278 aa).

8 helical membrane-spanning segments follow: residues 18–38, 40–60, 61–81, 136–156, 172–192, 194–214, 220–240, and 244–264; these read ALIT…FIIL, GMSL…ALSF, ILGI…SILI, VTIG…RPLL, VKLY…TAMQ, VGTI…YLYA, MMLL…FIGY, and IAVG…SFFI.

Belongs to the ABC-3 integral membrane protein family.

The protein resides in the cell membrane. Its function is as follows. Part of an ABC transporter complex involved in manganese import. The chain is Manganese import system permease protein ScaB from Streptococcus pneumoniae.